A 665-amino-acid polypeptide reads, in one-letter code: Dual specificity protein phosphatase 16 (665 aa).

The Rhodanese domain maps to 22-137; that stretch reads GTEKVLLIDS…FSRCFPGLCE (116 aa). A (Microbial infection) N6-acetyllysine; by EIS modification is found at lysine 55. A Tyrosine-protein phosphatase domain is found at 158–300; that stretch reads GPTRILPNLY…LLDYEKKIKN (143 aa). Cysteine 244 (phosphocysteine intermediate) is an active-site residue. Residues 321–368 are disordered; that stretch reads EPVPAVSEGGQKSETPLSPPCADSATSEAAGQRPVHPASVPSVPSVQP. The segment covering 354–368 has biased composition (low complexity); the sequence is PVHPASVPSVPSVQP. Serine 446 carries the phosphoserine; by MAPK1 modification. 2 stretches are compositionally biased toward polar residues: residues 449-458 and 487-499; these read QELSEQTPET and VRTS…QRSL. Disordered regions lie at residues 449-505 and 597-665; these read QELS…PLHR and VRRR…IEVS. At serine 501 the chain carries Phosphoserine. Residues 602–622 are compositionally biased toward basic and acidic residues; sequence KPSDRADSRRSWHEESPFEKQ.

It belongs to the protein-tyrosine phosphatase family. Non-receptor class dual specificity subfamily. Interacts with ARRB2. In terms of processing, phosphorylated at Ser-446 by MAPK1/ERK2, which prevents its degradation, and thereby stabilizes it and blocks JNK MAPK activity. (Microbial infection) Acetylated at Lys-55 by the M.tuberculosis Eis protein; this leads to the inhibition of JNK-dependent autophagy, phagosome maturation, and ROS (reactive oxygen species) generation for enhanced intracellular survival of M.tuberculosis.

It localises to the cytoplasm. The protein localises to the nucleus. It is found in the cytoplasmic vesicle. The catalysed reaction is O-phospho-L-tyrosyl-[protein] + H2O = L-tyrosyl-[protein] + phosphate. It catalyses the reaction O-phospho-L-seryl-[protein] + H2O = L-seryl-[protein] + phosphate. The enzyme catalyses O-phospho-L-threonyl-[protein] + H2O = L-threonyl-[protein] + phosphate. Its function is as follows. Dual specificity protein phosphatase involved in the inactivation of MAP kinases. Dephosphorylates MAPK10 bound to ARRB2. In Homo sapiens (Human), this protein is Dual specificity protein phosphatase 16 (DUSP16).